The primary structure comprises 76 residues: Defensin-like protein 163 (76 aa).

A signal peptide spans 1 to 27; it reads MAKLIYSYLFISMFVLSVLLALPNAEG. 4 disulfides stabilise this stretch: Cys-33/Cys-76, Cys-43/Cys-62, Cys-48/Cys-70, and Cys-52/Cys-72.

Belongs to the DEFL family.

The protein resides in the secreted. In Arabidopsis thaliana (Mouse-ear cress), this protein is Defensin-like protein 163 (LCR24).